The primary structure comprises 157 residues: Class-10 pathogenesis-related protein 1 (157 aa).

It belongs to the BetVI family. As to expression, expressed in roots. Detected in nodules and leaves, but not in stems and flowers.

In Medicago truncatula (Barrel medic), this protein is Class-10 pathogenesis-related protein 1 (PR10-1).